A 221-amino-acid chain; its full sequence is GTP cyclohydrolase-2 (221 aa).

63–67 (RLHSE) is a binding site for GTP. Zn(2+) is bound by residues C68, C79, and C81. GTP contacts are provided by residues Q84, 107-109 (EGR), and T129. The active-site Proton acceptor is the D141. The Nucleophile role is filled by R143. Residues S164 and K169 each coordinate GTP.

Belongs to the GTP cyclohydrolase II family. Zn(2+) serves as cofactor.

The catalysed reaction is GTP + 4 H2O = 2,5-diamino-6-hydroxy-4-(5-phosphoribosylamino)-pyrimidine + formate + 2 phosphate + 3 H(+). Its pathway is cofactor biosynthesis; riboflavin biosynthesis; 5-amino-6-(D-ribitylamino)uracil from GTP: step 1/4. Its function is as follows. Catalyzes the conversion of GTP to 2,5-diamino-6-ribosylamino-4(3H)-pyrimidinone 5'-phosphate (DARP), formate and pyrophosphate. This chain is GTP cyclohydrolase-2, found in Streptomyces coelicolor (strain ATCC BAA-471 / A3(2) / M145).